We begin with the raw amino-acid sequence, 345 residues long: Heat-inducible transcription repressor HrcA (345 aa).

The protein belongs to the HrcA family.

Its function is as follows. Negative regulator of class I heat shock genes (grpE-dnaK-dnaJ and groELS operons). Prevents heat-shock induction of these operons. The chain is Heat-inducible transcription repressor HrcA from Lachnoclostridium phytofermentans (strain ATCC 700394 / DSM 18823 / ISDg) (Clostridium phytofermentans).